A 207-amino-acid chain; its full sequence is MGNMMSKVNNLLYTKLRGLFSGQSERSITMIGLDGAGKTTLLLYLQTGEVHQTVPTLGFNCENVTLGSMKFQVWDIGGQNSFMRFWHQYINEGCGIIYMVDCADPQRFGKSGEELWRILNILNSPRPLLVLANKIDLIREHERSEVVKSIRNEFNLERYNGPSQVVPISVLQAGSMTSANDENGREIIDAFRWLNKELEKMPRAEAL.

The N-myristoyl glycine moiety is linked to residue Gly2. GTP-binding positions include 32-39 (GLDGAGKT), 75-79 (DIGGQ), and 133-136 (NKID).

This sequence belongs to the small GTPase superfamily. Arf family.

The protein localises to the golgi apparatus. In terms of biological role, GTP-binding protein involved in protein trafficking; may modulate vesicle budding and uncoating within the Golgi apparatus. The protein is ADP-ribosylation factor (ARF-1) of Encephalitozoon cuniculi (strain GB-M1) (Microsporidian parasite).